The primary structure comprises 351 residues: MITLAVDAMGGDQGLAVTVPGATAFLQAHPDVRLIMTGDETQLRQALTAAGAPMERIDICHTTQVVGMDESPQSALKNKKDSSMRVAINQVKEGKAQAAVSAGNTGALMATARFVLKTIPGIERPAIAKFLPSDTDHVTLALDLGANVDCTPEQLAQFAVIGSELVHALHPQKGQPRVGLVNVGTEDIKGTDTVKQTYKLLQNSKLNFIGNIESNGILYGEADVVVADGFVGNVMLKTIEGAVKFMSGAIRREFQSNLFNKLAAVAALPALKGLKNKLDPRKFNGAILLGLRGIVIKSHGGTDETGFRYALEEAYHEAKSAGLSKIEQGVAEQLAALETAKAVQNENADGL.

Belongs to the PlsX family. Homodimer. Probably interacts with PlsY.

It localises to the cytoplasm. The enzyme catalyses a fatty acyl-[ACP] + phosphate = an acyl phosphate + holo-[ACP]. The protein operates within lipid metabolism; phospholipid metabolism. In terms of biological role, catalyzes the reversible formation of acyl-phosphate (acyl-PO(4)) from acyl-[acyl-carrier-protein] (acyl-ACP). This enzyme utilizes acyl-ACP as fatty acyl donor, but not acyl-CoA. This Neisseria meningitidis serogroup C / serotype 2a (strain ATCC 700532 / DSM 15464 / FAM18) protein is Phosphate acyltransferase.